We begin with the raw amino-acid sequence, 318 residues long: Sensor histidine kinase NatK (318 aa).

A run of 3 helical transmembrane segments spans residues 4–24 (LFQC…AAAF), 27–47 (STAA…LYIW), and 72–82 (VGVVLIGTDIM). Positions 132-318 (RNHDTMKHIT…RLEIKIPFQK (187 aa)) constitute a Histidine kinase domain. H134 carries the phosphohistidine; by autocatalysis modification.

The protein localises to the cell membrane. It carries out the reaction ATP + protein L-histidine = ADP + protein N-phospho-L-histidine.. Functionally, member of the two-component regulatory system NatK/NatR that positively regulates the expression of the natAB operon. Potentially phosphorylates NatR. This is Sensor histidine kinase NatK from Bacillus subtilis (strain 168).